Reading from the N-terminus, the 825-residue chain is MEFIDYDTFGVSDTISTSAGDGALPEPVAILNLNALSFEKPDEHNEINLSELLVDRGTTDGGKNVNLNAKMSNYAKLSMESLHISGTSDNLSVNTLPSYIPDGNKESLDISKLVFQQKNQSLEATNMILNKKLSKILNDYSFSNYQSTSYLRKSLNSLEENKVALSLDENKLTNPGYIGTLARKTLKSDVETELLKEHLTVLEEFRPIVRKIKKLSSSIENIQNLGTSMLKESKENATGTEEPMFDRIKSLRKDIDNLKLKKELLLSIRDQYTLTQVEDDKISNGSVDEELFEIINKVMRIKEKTVFMLGLENPNAGKSLMHEVNNILQRLNRKLFNHLLDILYIFESGTNNVNEKFLSPNEKGVQTFQRSLIYLSNDLEYFNEFLKRVTSLRSKTVLDQFLSQFDFNSKDANPIMLSAYDPLRYIGDILANVYSLIANEADFVRSLFNFQEMQMENTPVSIIQKKDEFLDGLDSKLLNEIIQSLSNTCRIRIGQIIKFEDNPITNFEIVKLLELYKMMFERKGIKSNSSLINNLSALGVVSQEKLIECYSNFVNEIEKTTYVATEDFLPPEWLSDYLVKITDLFEAYEQHGGRESDTNEIIITDTFLEKVIKEPIENTLLKQLKEGFPLAKKEEQARTSLYTVQINCFDLIKSRIQPFASVIFSKDGEKNDVLKWISDKSEEVINQMLELQKKILFDKTGLGMYNNLLNMIFPISSVKDDLDLDMYYSLSENSLMNLDSINTNVHEKLNDYVPIALTDMQGNLLFKLTSPVIADKICDSCFSTLSEFYITFRKTLMHIYPEEEIKIKEILNFSEEEFKTLVGIE.

This sequence belongs to the COG6 family.

It is found in the golgi apparatus membrane. Acts as a component of the peripheral membrane COG complex that is involved in intra-Golgi protein trafficking. COG is located at the cis-Golgi, and regulates tethering of retrograde intra-Golgi vesicles and possibly a number of other membrane trafficking events. This is Conserved oligomeric Golgi complex subunit 6 (COG6) from Vanderwaltozyma polyspora (strain ATCC 22028 / DSM 70294 / BCRC 21397 / CBS 2163 / NBRC 10782 / NRRL Y-8283 / UCD 57-17) (Kluyveromyces polysporus).